The sequence spans 229 residues: Peptidase E (229 aa).

Catalysis depends on charge relay system residues Ser120, Asp135, and His157.

This sequence belongs to the peptidase S51 family.

It localises to the cytoplasm. It carries out the reaction Dipeptidase E catalyzes the hydrolysis of dipeptides Asp-|-Xaa. It does not act on peptides with N-terminal Glu, Asn or Gln, nor does it cleave isoaspartyl peptides.. Hydrolyzes dipeptides containing N-terminal aspartate residues. May play a role in allowing the cell to use peptide aspartate to spare carbon otherwise required for the synthesis of the aspartate family of amino acids. This Citrobacter koseri (strain ATCC BAA-895 / CDC 4225-83 / SGSC4696) protein is Peptidase E.